The chain runs to 114 residues: UPF0145 protein SSO1976 (114 aa).

It belongs to the UPF0145 family.

The polypeptide is UPF0145 protein SSO1976 (Saccharolobus solfataricus (strain ATCC 35092 / DSM 1617 / JCM 11322 / P2) (Sulfolobus solfataricus)).